The primary structure comprises 86 residues: Sugar transporter SemiSWEET (86 aa).

A run of 3 helical transmembrane segments spans residues 3–23 (PFLIKLIGFAAATCTTVAYAP), 37–57 (ISLGMFLVMVLGLALWLIYGL), and 61–81 (DAPLIASNAVTMLLAGGILVM). A PQ-loop domain is found at 6–63 (IKLIGFAAATCTTVAYAPQFIKVLKTRSARDISLGMFLVMVLGLALWLIYGLLSGDAP).

In terms of assembly, homodimer. Homooligomer.

It is found in the cell membrane. Its function is as follows. Mediates sucrose transmembrane transport down a concentration gradient. The chain is Sugar transporter SemiSWEET from Bradyrhizobium diazoefficiens (strain JCM 10833 / BCRC 13528 / IAM 13628 / NBRC 14792 / USDA 110).